Reading from the N-terminus, the 134-residue chain is Interleukin-5 (134 aa).

The signal sequence occupies residues 1–21 (MRMLLNLSLLALGAAYVSAFA). Residues asparagine 76 and asparagine 90 are each glycosylated (N-linked (GlcNAc...) asparagine).

The protein belongs to the IL-5 family. As to quaternary structure, homodimer; disulfide-linked. Interacts with IL5RA. Interacts with CSF2RB.

It is found in the secreted. In terms of biological role, homodimeric cytokine expressed predominantly by T-lymphocytes and NK cells that plays an important role in the survival, differentiation, and chemotaxis of eosinophils. Also acts on activated and resting B-cells to induce immunoglobulin production, growth, and differentiation. Mechanistically, exerts its biological effects through a receptor composed of IL5RA subunit and the cytokine receptor common subunit beta/CSF2RB. Binding to the receptor leads to activation of various kinases including LYN, SYK and JAK2 and thereby propagates signals through the RAS-MAPK and JAK-STAT5 pathways respectively. The protein is Interleukin-5 (IL5) of Canis lupus familiaris (Dog).